We begin with the raw amino-acid sequence, 201 residues long: UPF0301 protein MSMEG_6921/MSMEI_6732 (201 aa).

Belongs to the UPF0301 (AlgH) family.

This chain is UPF0301 protein MSMEG_6921/MSMEI_6732, found in Mycolicibacterium smegmatis (strain ATCC 700084 / mc(2)155) (Mycobacterium smegmatis).